The primary structure comprises 901 residues: HTH-type transcriptional regulator MalT (901 aa).

39–46 provides a ligand contact to ATP; the sequence is SPAGYGKT. Positions 829 to 894 constitute an HTH luxR-type domain; that stretch reads ELIRTSPLTQ…DAVQHAQQLL (66 aa). Residues 853-872 constitute a DNA-binding region (H-T-H motif); it reads NDQIAGELDVAATTIKTHIR.

It belongs to the MalT family. In terms of assembly, monomer in solution. Oligomerizes to an active state in the presence of the positive effectors ATP and maltotriose.

With respect to regulation, activated by ATP and maltotriose, which are both required for DNA binding. Positively regulates the transcription of the maltose regulon whose gene products are responsible for uptake and catabolism of malto-oligosaccharides. Specifically binds to the promoter region of its target genes, recognizing a short DNA motif called the MalT box. This is HTH-type transcriptional regulator MalT from Cronobacter sakazakii (strain ATCC BAA-894) (Enterobacter sakazakii).